The sequence spans 126 residues: Aspartate 1-decarboxylase (126 aa).

The active-site Schiff-base intermediate with substrate; via pyruvic acid is serine 25. Serine 25 carries the post-translational modification Pyruvic acid (Ser). Position 57 (threonine 57) interacts with substrate. The active-site Proton donor is the tyrosine 58. Residue 73–75 coordinates substrate; sequence GAA.

The protein belongs to the PanD family. In terms of assembly, heterooctamer of four alpha and four beta subunits. It depends on pyruvate as a cofactor. Post-translationally, is synthesized initially as an inactive proenzyme, which is activated by self-cleavage at a specific serine bond to produce a beta-subunit with a hydroxyl group at its C-terminus and an alpha-subunit with a pyruvoyl group at its N-terminus.

It localises to the cytoplasm. It carries out the reaction L-aspartate + H(+) = beta-alanine + CO2. Its pathway is cofactor biosynthesis; (R)-pantothenate biosynthesis; beta-alanine from L-aspartate: step 1/1. In terms of biological role, catalyzes the pyruvoyl-dependent decarboxylation of aspartate to produce beta-alanine. This chain is Aspartate 1-decarboxylase, found in Pectobacterium carotovorum subsp. carotovorum (strain PC1).